The primary structure comprises 85 residues: YcgL domain-containing protein PC1_1941 (85 aa).

One can recognise a YcgL domain in the interval 1–85 (MFCVIYRSAK…PVENLLNTPV (85 aa)).

The protein is YcgL domain-containing protein PC1_1941 of Pectobacterium carotovorum subsp. carotovorum (strain PC1).